Here is a 430-residue protein sequence, read N- to C-terminus: Glial fibrillary acidic protein (430 aa).

The segment at 1–69 (MERRRITSAR…KETRASERAE (69 aa)) is head. Threonine 7 is modified (phosphothreonine; by AURKB and ROCK1). At arginine 11 the chain carries Omega-N-methylarginine. At serine 12 the chain carries Phosphoserine; by AURKB and ROCK1. An Omega-N-methylarginine modification is found at arginine 20. Position 33 is a citrulline (arginine 33). Serine 35 carries the post-translational modification Phosphoserine; by AURKB and ROCK1. A Phosphothreonine modification is found at threonine 40. The 309-residue stretch at 66-374 (ERAEMMELND…KLLEGEENRI (309 aa)) folds into the IF rod domain. Residues 70–101 (MMELNDRFASYIEKVRFLEQQNKALAAELNQL) are coil 1A. The residue at position 79 (serine 79) is a Phosphoserine. Residues 102-112 (RAKEPTKLADV) form a linker 1 region. Phosphothreonine occurs at positions 107 and 147. Positions 113–211 (YQAELRELRL…EEEVRELREQ (99 aa)) are coil 1B. A linker 12 region spans residues 212–227 (LAQQQVHVEMDVAKPD). Residues 228-249 (LTAALREIRTQYEAVATSNMQE) form a coil 2A region. The tract at residues 250–253 (TEEW) is linker 2. Positions 254 to 374 (YRSKFADLTD…KLLEGEENRI (121 aa)) are coil 2B. Serine 266 is modified (phosphoserine). Arginine 267 is subject to Citrulline. Position 320 is a phosphoserine (serine 320). The tail stretch occupies residues 375–430 (TIPVQTFSNLQIRETSLDTKSVSEGHLKRNIVVKTVEMRDGEVIKDSKQEHKDVVM). The residue at position 380 (threonine 380) is a Phosphothreonine. At serine 382 the chain carries Phosphoserine. Citrulline occurs at positions 403 and 413.

Belongs to the intermediate filament family. As to quaternary structure, interacts with SYNM. Interacts with PSEN1 (via N-terminus). In terms of processing, phosphorylated by PKN1. In terms of tissue distribution, brain; isoform 2 expressed at 20-fold lower level than isoform 1.

The protein localises to the cytoplasm. In terms of biological role, GFAP, a class-III intermediate filament, is a cell-specific marker that, during the development of the central nervous system, distinguishes astrocytes from other glial cells. This is Glial fibrillary acidic protein (Gfap) from Mus musculus (Mouse).